The chain runs to 170 residues: Ureidoglycolate lyase (170 aa).

It belongs to the ureidoglycolate lyase family. Homodimer. The cofactor is Ni(2+).

The enzyme catalyses (S)-ureidoglycolate = urea + glyoxylate. Its pathway is nitrogen metabolism; (S)-allantoin degradation. Its function is as follows. Catalyzes the catabolism of the allantoin degradation intermediate (S)-ureidoglycolate, generating urea and glyoxylate. Involved in the utilization of allantoin as nitrogen source. The sequence is that of Ureidoglycolate lyase from Burkholderia mallei (strain NCTC 10247).